A 188-amino-acid chain; its full sequence is Peptidyl-tRNA hydrolase (188 aa).

Residue Tyr-14 participates in tRNA binding. His-19 acts as the Proton acceptor in catalysis. 3 residues coordinate tRNA: Tyr-64, Asn-66, and Asn-112.

This sequence belongs to the PTH family. As to quaternary structure, monomer.

The protein resides in the cytoplasm. It carries out the reaction an N-acyl-L-alpha-aminoacyl-tRNA + H2O = an N-acyl-L-amino acid + a tRNA + H(+). In terms of biological role, hydrolyzes ribosome-free peptidyl-tRNAs (with 1 or more amino acids incorporated), which drop off the ribosome during protein synthesis, or as a result of ribosome stalling. Catalyzes the release of premature peptidyl moieties from peptidyl-tRNA molecules trapped in stalled 50S ribosomal subunits, and thus maintains levels of free tRNAs and 50S ribosomes. The polypeptide is Peptidyl-tRNA hydrolase (Bacillus velezensis (strain DSM 23117 / BGSC 10A6 / LMG 26770 / FZB42) (Bacillus amyloliquefaciens subsp. plantarum)).